We begin with the raw amino-acid sequence, 166 residues long: Phosphopantetheine adenylyltransferase (166 aa).

Thr10 provides a ligand contact to substrate. Residues 10-11 (TF) and His18 each bind ATP. Substrate contacts are provided by Lys42, Leu74, and Arg88. Residues 89–91 (GLR), Glu99, and 124–130 (NSFISSS) contribute to the ATP site.

Belongs to the bacterial CoaD family. Homohexamer. It depends on Mg(2+) as a cofactor.

It localises to the cytoplasm. It catalyses the reaction (R)-4'-phosphopantetheine + ATP + H(+) = 3'-dephospho-CoA + diphosphate. It participates in cofactor biosynthesis; coenzyme A biosynthesis; CoA from (R)-pantothenate: step 4/5. Its function is as follows. Reversibly transfers an adenylyl group from ATP to 4'-phosphopantetheine, yielding dephospho-CoA (dPCoA) and pyrophosphate. The polypeptide is Phosphopantetheine adenylyltransferase (Idiomarina loihiensis (strain ATCC BAA-735 / DSM 15497 / L2-TR)).